Consider the following 276-residue polypeptide: MDAEIFSLDSLSIYKDINIASAKPSLKERKNIKHYALDHLNIDEKNNAQLFKTLLEDAMRVSSKEILLIVGGSSFYLKSILEGLSRMPKISGEEVVKIEREISTLADPYAFLKSIDPTIAFKIHPNDTYRIHKALEIFYATHTPPSEYFKANPKKPFEHAISLFALSIEKSTLHSNIKQRTKNMLHSGLVEEIKALYTQYPKDSQPFKAIGVKESILFLEKQLTLKELEEAIISNTMKLAKCQNTFNKTQFNNLYVGSVKEVRHAILNHSKSAIKG.

An interaction with substrate tRNA region spans residues 9-12 (DSLS).

This sequence belongs to the IPP transferase family. Monomer. The cofactor is Mg(2+).

It catalyses the reaction adenosine(37) in tRNA + dimethylallyl diphosphate = N(6)-dimethylallyladenosine(37) in tRNA + diphosphate. Catalyzes the transfer of a dimethylallyl group onto the adenine at position 37 in tRNAs that read codons beginning with uridine, leading to the formation of N6-(dimethylallyl)adenosine (i(6)A). The protein is tRNA dimethylallyltransferase (miaA) of Helicobacter pylori (strain HPAG1).